Consider the following 435-residue polypeptide: Ribosomal protein uS12 methylthiotransferase RimO (435 aa).

Positions 3-113 constitute an MTTase N-terminal domain; it reads HKVGFVSLGC…VVNAVHQHLP (111 aa). Cys12, Cys48, Cys77, Cys144, Cys148, and Cys151 together coordinate [4Fe-4S] cluster. Residues 130 to 367 enclose the Radical SAM core domain; sequence LTPRHYAYLK…MQVQAEISRN (238 aa). Residues 370 to 435 enclose the TRAM domain; it reads KNKIGSTQTV…DDYDLYASLV (66 aa).

This sequence belongs to the methylthiotransferase family. RimO subfamily. It depends on [4Fe-4S] cluster as a cofactor.

The protein resides in the cytoplasm. The enzyme catalyses L-aspartate(89)-[ribosomal protein uS12]-hydrogen + (sulfur carrier)-SH + AH2 + 2 S-adenosyl-L-methionine = 3-methylsulfanyl-L-aspartate(89)-[ribosomal protein uS12]-hydrogen + (sulfur carrier)-H + 5'-deoxyadenosine + L-methionine + A + S-adenosyl-L-homocysteine + 2 H(+). Its function is as follows. Catalyzes the methylthiolation of an aspartic acid residue of ribosomal protein uS12. The protein is Ribosomal protein uS12 methylthiotransferase RimO of Legionella pneumophila (strain Lens).